Reading from the N-terminus, the 216-residue chain is MSCLPALDKFLQNYHQAYLTSLGELPRYYPQGEPSVCIQGEFHADLDQAVSWQPVKREVEGSFANVEHALELTLWPEINHFYGQYFSAPLLFDSKWGTGELLQVWNEDDFTCLQQNLIGHLMMKKKLKQPPTWFIGLLDEGDKMLTINNSDGSVWIELPGEIPTQQLSPSLAEFIGALSPRIAPPVKHEELPMPALEHPGIFASFKRMWQNLFGKR.

Belongs to the Syd family.

It localises to the cell inner membrane. Interacts with the SecY protein in vivo. May bind preferentially to an uncomplexed state of SecY, thus functioning either as a chelating agent for excess SecY in the cell or as a regulatory factor that negatively controls the translocase function. The protein is Protein Syd of Shewanella baltica (strain OS195).